The following is a 409-amino-acid chain: LLLAGLCCLLPGSLAEDPQGDAAQKTDTPPHDQNHPTLNKITPSLAEFAFSLYRQLAHQSNSTNIFFSPVSIATAFAMLSLGTKADTHSEILEGLNFNLTEIPEAQVHEGFQELLRTLNKPDSQLQLTTGNGLFLNKSLKVVDKFLEDVKNLYHSEAFSVNFEDTEEAKKQINNYVEKGTQGKVVDLVKELDRDTVFALVNYIFFKGKWERPFEVEATEEEDFHVDQATTVKVPMMRRLGMFNIYHCEKLSSWVLLMKYLGNATAIFFLPDEGKLQHLENELTHDIITKFLENENRRSANLHLPKLAITGTYDLKTVLGHLGITKVFSNGADLSGVTEDAPLKLSKAVHKAVLTIDEKGTEAAGAMFLEAIPMSIPPEVKFNKPFVFLMIEQNTKSPLFIGKVVNPTQK.

A signal peptide spans 1 to 15; the sequence is LLLAGLCCLLPGSLA. The interval 18-39 is disordered; that stretch reads PQGDAAQKTDTPPHDQNHPTLN. N-linked (GlcNAc...) asparagine glycosylation is found at N61, N98, N136, and N262. The tract at residues 364–383 is RCL; the sequence is GAMFLEAIPMSIPPEVKFNK. S374 is subject to Phosphoserine.

This sequence belongs to the serpin family. Interacts with CELA2A. Interacts with ERGIC3 and LMAN1/ERGIC53. Interacts with PRSS1/Trypsin. Plasma.

The protein localises to the secreted. Functionally, inhibitor of serine proteases. Its primary target is elastase, but it also has a moderate affinity for plasmin and thrombin. Inhibits trypsin, chymotrypsin and plasminogen activator. This Papio anubis (Olive baboon) protein is Alpha-1-antitrypsin (SERPINA1).